The sequence spans 469 residues: Acetyl-CoA decarbonylase/synthase complex subunit beta 1 (469 aa).

C189, C192, C278, and C280 together coordinate [Ni-Fe-S] cluster.

It belongs to the CdhC family. As to quaternary structure, monomer. The ACDS complex is made up of alpha, epsilon, beta, gamma and delta chains with a probable stoichiometry of (alpha(2)epsilon(2))(4)-beta(8)-(gamma(1)delta(1))(8) (Potential). The cofactor is [Ni-Fe-S] cluster.

The enzyme catalyses Co(I)-[corrinoid Fe-S protein] + acetyl-CoA + H(+) = methyl-Co(III)-[corrinoid Fe-S protein] + CO + CoA. The protein operates within one-carbon metabolism; methanogenesis from acetate. Part of a complex that catalyzes the reversible cleavage of acetyl-CoA, allowing growth on acetate as sole source of carbon and energy. The alpha-epsilon complex generates CO from CO(2), while the beta subunit (this protein) combines the CO with CoA and a methyl group to form acetyl-CoA. The methyl group, which is incorporated into acetyl-CoA, is transferred to the beta subunit by a corrinoid iron-sulfur protein (the gamma-delta complex). This is Acetyl-CoA decarbonylase/synthase complex subunit beta 1 (cdhC1) from Methanosarcina acetivorans (strain ATCC 35395 / DSM 2834 / JCM 12185 / C2A).